We begin with the raw amino-acid sequence, 185 residues long: Ribosome-recycling factor (185 aa).

This sequence belongs to the RRF family.

It localises to the cytoplasm. Responsible for the release of ribosomes from messenger RNA at the termination of protein biosynthesis. May increase the efficiency of translation by recycling ribosomes from one round of translation to another. This is Ribosome-recycling factor from Vesicomyosocius okutanii subsp. Calyptogena okutanii (strain HA).